Consider the following 252-residue polypeptide: Bidirectional sugar transporter SWEET3b (252 aa).

At Met-1–Val-8 the chain is on the extracellular side. The chain crosses the membrane as a helical span at residues Ala-9 to Phe-29. The MtN3/slv 1 domain occupies Val-10–Glu-98. Over Arg-30 to Cys-43 the chain is Cytoplasmic. A helical membrane pass occupies residues Val-44–Val-64. Topologically, residues Ser-65–Ser-75 are extracellular. An N-linked (GlcNAc...) asparagine glycan is attached at Asn-70. The chain crosses the membrane as a helical span at residues Ile-76–Pro-96. At Arg-97 to Arg-105 the chain is on the cytoplasmic side. A helical transmembrane segment spans residues Met-106–His-126. The Extracellular segment spans residues Thr-127–Lys-132. A helical membrane pass occupies residues Val-133 to Ala-153. Residues Phe-134–Lys-219 enclose the MtN3/slv 2 domain. Residues Ala-154–Pro-167 are Cytoplasmic-facing. The helical transmembrane segment at Phe-168 to Gly-188 threads the bilayer. Residues Lys-189–Asp-190 lie on the Extracellular side of the membrane. Residues Leu-191–Tyr-211 traverse the membrane as a helical segment. Over Cys-212–Asp-252 the chain is Cytoplasmic.

Belongs to the SWEET sugar transporter family. In terms of assembly, forms homooligomers and/or heterooligomers.

It localises to the cell membrane. Its function is as follows. Mediates both low-affinity uptake and efflux of sugar across the plasma membrane. This Oryza sativa subsp. japonica (Rice) protein is Bidirectional sugar transporter SWEET3b (SWEET3B).